We begin with the raw amino-acid sequence, 991 residues long: Transcription factor ROB1 (991 aa).

A DNA-binding region (zn(2)-C6 fungal-type) is located at residues 17 to 43; that stretch reads CTVCRTIKRKCDGNTPCSNCLKRNQEC. Disordered stretches follow at residues 150–188, 792–875, and 901–959; these read LNQQQQQQQPSPQSLSQSSASEVSTRSSPASPNSTISLA, FYAQ…EDNP, and QEEG…PQLP. Positions 152–168 are enriched in low complexity; the sequence is QQQQQQQPSPQSLSQSS. Residues 169 to 187 are compositionally biased toward polar residues; sequence ASEVSTRSSPASPNSTISL. A compositionally biased stretch (low complexity) spans 795 to 806; it reads QQQQQQQQQQQQ. Composition is skewed to basic and acidic residues over residues 807–817 and 825–855; these read PKHEYHDHQQE and QEEHSEKDIKIEIKDEPQPQEEHIHQDYPMK. Residues 907–931 are compositionally biased toward low complexity; the sequence is QQQQQQQQEQVQQEQVQQEQVQQDQ.

It is found in the nucleus. Functionally, transcription factor that mediates conventional biofilm formation and plays a key role in microcolony formation under both flow and static conditions and to epithelial surfaces. Modulates infection of mammalian hosts. The chain is Transcription factor ROB1 from Candida albicans (strain SC5314 / ATCC MYA-2876) (Yeast).